A 692-amino-acid polypeptide reads, in one-letter code: Glycine--tRNA ligase beta subunit (692 aa).

The protein belongs to the class-II aminoacyl-tRNA synthetase family. As to quaternary structure, tetramer of two alpha and two beta subunits.

The protein resides in the cytoplasm. It catalyses the reaction tRNA(Gly) + glycine + ATP = glycyl-tRNA(Gly) + AMP + diphosphate. This Hahella chejuensis (strain KCTC 2396) protein is Glycine--tRNA ligase beta subunit.